We begin with the raw amino-acid sequence, 1375 residues long: Capping protein, Arp2/3 and myosin-I linker protein 3 (1375 aa).

The disordered stretch occupies residues 124 to 151 (IRRGNADTPEGPRDTSPNSETSTSTTHS). Residues 138-151 (TSPNSETSTSTTHS) are compositionally biased toward low complexity. LRR repeat units follow at residues 244–264 (SLEE…QKLA), 274–295 (VLHA…SLSQ), 303–323 (GLTK…QALG), 335–357 (SLRY…NALY), 365–386 (ALVH…GALL), 392–413 (HLTY…EAPP), 424–444 (TLSH…RALL), 455–475 (DLHL…ALQE), 482–501 (CIGS…LTLV), and 509–530 (SLKH…EEIL). Disordered stretches follow at residues 864-901 (RTLS…GTNI) and 969-1375 (KLRH…PGTD). The span at 981–997 (PRTTPPGPGRPSVPVPG) shows a compositional bias: pro residues. Residues 1007-1022 (RLDEGLEDFFSRRVMD) are compositionally biased toward basic and acidic residues. Basic residues predominate over residues 1047–1062 (QKKRRRGLFHFRRPRS). Pro residues predominate over residues 1078–1097 (LPPPPPPPPTQESPPSPDPP). The segment covering 1098–1108 (SLGNNSSPCWS) has biased composition (low complexity). A compositionally biased stretch (basic and acidic residues) spans 1219–1229 (RRAEATWHIAE). Over residues 1233–1244 (ANHSCQSPSPAS) the composition is skewed to polar residues. Residues 1272–1281 (PIGPRPPKPV) show a composition bias toward pro residues. Positions 1348–1360 (QSCDKLEPDRRQP) are enriched in basic and acidic residues.

This sequence belongs to the CARMIL family.

It is found in the cytoplasm. The protein resides in the cell membrane. This chain is Capping protein, Arp2/3 and myosin-I linker protein 3 (Carmil3), found in Mus musculus (Mouse).